We begin with the raw amino-acid sequence, 89 residues long: Small ribosomal subunit protein uS15 (89 aa).

Belongs to the universal ribosomal protein uS15 family. As to quaternary structure, part of the 30S ribosomal subunit. Forms a bridge to the 50S subunit in the 70S ribosome, contacting the 23S rRNA.

Functionally, one of the primary rRNA binding proteins, it binds directly to 16S rRNA where it helps nucleate assembly of the platform of the 30S subunit by binding and bridging several RNA helices of the 16S rRNA. Forms an intersubunit bridge (bridge B4) with the 23S rRNA of the 50S subunit in the ribosome. This chain is Small ribosomal subunit protein uS15, found in Oceanobacillus iheyensis (strain DSM 14371 / CIP 107618 / JCM 11309 / KCTC 3954 / HTE831).